The primary structure comprises 89 residues: UPF0213 protein HQ_3675A (89 aa).

Residues 3 to 78 enclose the GIY-YIG domain; the sequence is DYHYVYIVEC…KSYTREKKQQ (76 aa).

This sequence belongs to the UPF0213 family.

The sequence is that of UPF0213 protein HQ_3675A from Haloquadratum walsbyi (strain DSM 16790 / HBSQ001).